The chain runs to 364 residues: MSDGKDSLDLSGLGAAVPNAKELSAEDKANLVESIKNTLQGLAARHTDVLESLEPKVRKRVEVLREIQSQHDDLEAKFFEERAALEAKYQKMYEPLYSKRYEIVNGVVEVDGVTKEAADETPAEQKEEKGVPEFWLNAMKNHEILSEEIQERDEEALKYLKDIKWYRISEPKGFKLEFYFDTNPFFKNSVLTKTYHMIDEDEPILEKAIGTEIEWFPGKCLTQKVLKKKPKKGSKNTKPITKTENCESFFNFFSPPQVPDDDEEIDEDTAEQLQNQMEQDYDIGSTIRDKIIPHAVSWFTGEAAQDEDFEGIMDDEDDDDEDDDDDEDEDDEDDDEDDEDEKKGGRVPSGEGQQGERPAECKQQ.

The stretch at 32-86 (VESIKNTLQGLAARHTDVLESLEPKVRKRVEVLREIQSQHDDLEAKFFEERAALE) forms a coiled coil. The Nuclear export signal motif lies at 53-68 (LEPKVRKRVEVLREIQ). Residues 227-232 (KKKPKK) carry the Nuclear localization signal motif. Disordered stretches follow at residues 250–269 (FNFF…DEDT) and 301–364 (GEAA…CKQQ). 2 stretches are compositionally biased toward acidic residues: residues 259–269 (PDDDEEIDEDT) and 304–340 (AQDE…DDED). A Cysteine methyl ester modification is found at cysteine 361. A lipid anchor (S-farnesyl cysteine) is attached at cysteine 361. A propeptide spans 362–364 (KQQ) (removed in mature form).

Belongs to the nucleosome assembly protein (NAP) family. As to quaternary structure, binds preferentially histone H1 in vitro. Highly expressed in tissues exhibiting active cell-division activities, such as root and shoot meristems and young flowers.

It localises to the nucleus. Its subcellular location is the cytoplasm. Its function is as follows. May modulate chromatin structure by regulation of nucleosome assembly/disassembly. This chain is Nucleosome assembly protein 1;2 (NAP1;2), found in Oryza sativa subsp. indica (Rice).